A 356-amino-acid chain; its full sequence is Tyrosine recombinase XerS (356 aa).

The 106-residue stretch at 16–121 (IMPWYVLDYY…ALSSLYKYLT (106 aa)) folds into the Core-binding (CB) domain. The 186-residue stretch at 169 to 354 (AFLDYVDKEY…VNDEQKNALD (186 aa)) folds into the Tyr recombinase domain. Residues Arg210, Lys234, His306, Arg309, and His332 contribute to the active site. Catalysis depends on Tyr341, which acts as the O-(3'-phospho-DNA)-tyrosine intermediate.

It belongs to the 'phage' integrase family. XerS subfamily.

Its subcellular location is the cytoplasm. FtsK is required for recombination. Functionally, site-specific tyrosine recombinase, which acts by catalyzing the cutting and rejoining of the recombining DNA molecules. Essential to convert dimers of the bacterial chromosome into monomers to permit their segregation at cell division. This is Tyrosine recombinase XerS from Streptococcus pyogenes serotype M49 (strain NZ131).